The following is a 350-amino-acid chain: Hydroxymethylglutaryl-CoA synthase (350 aa).

Residue Glu83 is the Proton donor/acceptor of the active site. Catalysis depends on Cys115, which acts as the Acyl-thioester intermediate. The (3S)-3-hydroxy-3-methylglutaryl-CoA site is built by Cys115 and Thr156. CoA is bound at residue Arg204. Residues Thr206 and His239 each contribute to the (3S)-3-hydroxy-3-methylglutaryl-CoA site. His239 serves as the catalytic Proton donor/acceptor. Lys244 is a binding site for CoA. Positions 271 and 301 each coordinate (3S)-3-hydroxy-3-methylglutaryl-CoA.

The protein belongs to the thiolase-like superfamily. Archaeal HMG-CoA synthase family. As to quaternary structure, interacts with acetoacetyl-CoA thiolase that catalyzes the precedent step in the pathway and with a DUF35 protein. The acetoacetyl-CoA thiolase/HMG-CoA synthase complex channels the intermediate via a fused CoA-binding site, which allows for efficient coupling of the endergonic thiolase reaction with the exergonic HMGCS reaction.

The catalysed reaction is acetoacetyl-CoA + acetyl-CoA + H2O = (3S)-3-hydroxy-3-methylglutaryl-CoA + CoA + H(+). It functions in the pathway metabolic intermediate biosynthesis; (R)-mevalonate biosynthesis; (R)-mevalonate from acetyl-CoA: step 2/3. Its function is as follows. Catalyzes the condensation of acetyl-CoA with acetoacetyl-CoA to form 3-hydroxy-3-methylglutaryl-CoA (HMG-CoA). Functions in the mevalonate (MVA) pathway leading to isopentenyl diphosphate (IPP), a key precursor for the biosynthesis of isoprenoid compounds that are building blocks of archaeal membrane lipids. The sequence is that of Hydroxymethylglutaryl-CoA synthase from Thermococcus kodakarensis (strain ATCC BAA-918 / JCM 12380 / KOD1) (Pyrococcus kodakaraensis (strain KOD1)).